Consider the following 141-residue polypeptide: Hemoglobin subunit alpha (141 aa).

Residues 1-141 (VLSPADKTNV…VSTVLTSKYR (141 aa)) form the Globin domain. Ser-3 is subject to Phosphoserine. N6-succinyllysine is present on Lys-7. Thr-8 carries the phosphothreonine modification. The residue at position 11 (Lys-11) is an N6-succinyllysine. Position 16 is an N6-acetyllysine; alternate (Lys-16). N6-succinyllysine; alternate is present on Lys-16. Tyr-24 carries the post-translational modification Phosphotyrosine. Residue Ser-35 is modified to Phosphoserine. Lys-40 carries the post-translational modification N6-succinyllysine. The residue at position 49 (Ser-49) is a Phosphoserine. His-58 provides a ligand contact to O2. His-87 serves as a coordination point for heme b. Residue Ser-102 is modified to Phosphoserine. Thr-108 carries the post-translational modification Phosphothreonine. Ser-124 and Ser-131 each carry phosphoserine. Thr-134 and Thr-137 each carry phosphothreonine. Position 138 is a phosphoserine (Ser-138).

Belongs to the globin family. In terms of assembly, heterotetramer of two alpha chains and two beta chains. Red blood cells.

Functionally, involved in oxygen transport from the lung to the various peripheral tissues. In terms of biological role, hemopressin acts as an antagonist peptide of the cannabinoid receptor CNR1. Hemopressin-binding efficiently blocks cannabinoid receptor CNR1 and subsequent signaling. In Cebus capucinus (White-faced sapajou), this protein is Hemoglobin subunit alpha (HBA).